The chain runs to 326 residues: Light-induced protein, chloroplastic (326 aa).

The N-terminal 63 residues, 1–63 (MASISSLNQI…TNPKPKFTAQ (63 aa)), are a transit peptide targeting the chloroplast.

This sequence belongs to the LIPC family. Associates with the major light-harvesting antenna complex polypeptides of the PSII oxygen-evolving complex. Expressed in leaves.

The protein resides in the plastid. It is found in the chloroplast thylakoid membrane. Required for normal plant growth. May be both photoprotective and play an ancillary role in photosynthesis. May structurally stabilize thylakoids during osmotic and oxidative stress. The chain is Light-induced protein, chloroplastic from Solanum tuberosum (Potato).